The chain runs to 514 residues: Peptide chain release factor 3 (514 aa).

In terms of domain architecture, tr-type G spans 8 to 268 (KKRRTFAIIS…IFLKFAPEPH (261 aa)). Residues 17-24 (SHPDAGKT), 85-89 (DTPGH), and 139-142 (NKLD) contribute to the GTP site.

It belongs to the TRAFAC class translation factor GTPase superfamily. Classic translation factor GTPase family. PrfC subfamily.

Its subcellular location is the cytoplasm. Its function is as follows. Increases the formation of ribosomal termination complexes and stimulates activities of RF-1 and RF-2. It binds guanine nucleotides and has strong preference for UGA stop codons. It may interact directly with the ribosome. The stimulation of RF-1 and RF-2 is significantly reduced by GTP and GDP, but not by GMP. This Streptococcus pneumoniae serotype 2 (strain D39 / NCTC 7466) protein is Peptide chain release factor 3.